The sequence spans 283 residues: Non-selective voltage-gated ion channel VDAC3 (283 aa).

An N-acetylcysteine modification is found at cysteine 2. Threonine 4 carries the phosphothreonine modification. An N6-acetyllysine mark is found at lysine 12, lysine 15, and lysine 20. 2 beta stranded membrane-spanning segments follow: residues 26–35 (MVKIDLKTKS) and 39–47 (VEFSTSGHA). Lysine 53 participates in a covalent cross-link: Glycyl lysine isopeptide (Lys-Gly) (interchain with G-Cter in ubiquitin). 3 beta stranded membrane-spanning segments follow: residues 54–64 (ASGNLETKYKV), 69–76 (LTFTQKWN), and 80–89 (TLGTEISWEN). N6-acetyllysine is present on lysine 90. Residues 95–104 (LKLTLDTIFV) traverse the membrane as a beta stranded segment. Residues lysine 109 and lysine 110 each participate in a glycyl lysine isopeptide (Lys-Gly) (interchain with G-Cter in ubiquitin) cross-link. 10 beta stranded membrane-spanning segments follow: residues 111–120 (SGKLKASYRR), 123–130 (FSLGSNVD), 137–145 (TIYGWAVLA), 150–158 (LAGYQMSFD), 163–175 (KLSQ…GYKA), 178–185 (FQLHTHVN), 189–198 (EFGGSIYQKV), 202–211 (IETSINLAWT), 218–227 (RFGIAAKYKL), and 231–238 (TSLSAKVN). The residue at position 241 (serine 241) is a Phosphoserine. NAD(+) contacts are provided by residues 242 to 244 (LIG) and 260 to 264 (SALID). Transmembrane regions (beta stranded) follow at residues 242 to 251 (LIGLGYTQTL) and 254 to 263 (GVKLTLSALI). Lysine 266 is modified (N6-acetyllysine; alternate). Residue lysine 266 forms a Glycyl lysine isopeptide (Lys-Gly) (interchain with G-Cter in ubiquitin); alternate linkage. Residues 273 to 282 (HKVGLGFELE) form a beta stranded membrane-spanning segment.

The protein belongs to the eukaryotic mitochondrial porin family. Interacts with ARMC12 in a TBC1D21-dependent manner. Interacts with MISFA. In terms of processing, ubiquitinated by PRKN during mitophagy, leading to its degradation and enhancement of mitophagy. Deubiquitinated by USP30. In terms of tissue distribution, highest levels of expression detected in testis, less but still abundant expression in heart, kidney, brain, and skeletal muscle.

The protein localises to the mitochondrion outer membrane. Its subcellular location is the membrane. The enzyme catalyses chloride(in) = chloride(out). It catalyses the reaction K(+)(in) = K(+)(out). Non-selective voltage-gated ion channel that mediates the transport of anions and cations through the mitochondrion outer membrane and plasma membrane. Forms a high-conducting channel with a stable open state and a voltage-induced closure with a mild preference for anions over cations. Involved in male fertility and sperm mitochondrial sheath formation. This is Non-selective voltage-gated ion channel VDAC3 from Mus musculus (Mouse).